Reading from the N-terminus, the 415-residue chain is MADEGKEETGMGQVEEDFSVWKKNTPFLYDLLISHPLEWPSLTVHWVPSTPNPYVADSYFGVHKLILGTHTSGSAQDFLMVADVVTPTPNAEPGIGGANQDPFIPKVEIRQRIRVDGEVNRARCMPQKPTLVGAKTSGCEVFLFDYAKHAAKSQTSECDPDLRLVGHDKEGYGLSWSPFKEGYLLSGSQDQKICLWDVSATPQDKVLNAMFVYEGHESAIADVSWHMKNENLFGSAGEDGRLVIWDTRTNQMQHQVKVHEREVNYLSFNPFNEWVLATASSDSTVALFDLRKLNAPLHVMSSHEGEVFQVEWDPNHETVLASSGEDRRLMVWDLNRVGEEQLEIELDAEDGPPELLFSHGGHKAKISDFAWNKNEPWVIASVAEDNSLQVWQMAESIYRDEEDAEDIKEDITQQS.

WD repeat units lie at residues Gly-166–Val-206, Gly-215–Gln-255, Val-258–His-298, Ser-302–Leu-342, and Gly-361–Glu-401. The short motif at Leu-232 to Arg-248 is the DWD box element.

It belongs to the WD repeat RBAP46/RBAP48/MSI1 family.

The protein localises to the nucleus. Core histone-binding subunit that may target chromatin assembly factors, chromatin remodeling factors and histone deacetylases to their histone substrates in a manner that is regulated by nucleosomal DNA. In Arabidopsis thaliana (Mouse-ear cress), this protein is WD-40 repeat-containing protein MSI2 (MSI2).